Here is a 519-residue protein sequence, read N- to C-terminus: Zinc finger protein 692 (519 aa).

A disordered region spans residues 123–314 (GPSLSPTPSE…PAWDEDTAQI (192 aa)). The span at 145-155 (RSWCSEATSGQ) shows a compositional bias: polar residues. Ser162 bears the Phosphoserine mark. Basic and acidic residues predominate over residues 164 to 173 (HDERTQEARL). Residues 177–187 (VGPPPETFPPP) are compositionally biased toward pro residues. Positions 188–206 (GEEEGEEEEDNDEDEEEML) are enriched in acidic residues. Position 231 is a phosphoserine (Ser231). The span at 247-266 (AALSSPLAVPALSASSLSSR) shows a compositional bias: low complexity. Positions 277 to 303 (PQLSRTPQAAQQTEALASTGSQAQSAP) are enriched in polar residues. 5 C2H2-type zinc fingers span residues 328–353 (MPCDFPGCGRIFSNRQYLNHHKKYQH), 359–383 (FSCPEPACGKSFNFKKHLKEHMKLH), 389–411 (YICEFCARSFRTSSNLVIHRRIH), 417–439 (LQCEICGFTCRQKASLNWHQRKH), and 448–471 (FPCEFCGKRFEKPDSVAAHRSKSH). The segment at 469–519 (KSHPALLLAPQESPSGPLEPCPSISAPGPLGSSEGSRPSASPQAPTLLPQQ) is disordered. The residue at position 470 (Ser470) is a Phosphoserine; by AMPK. Over residues 501–519 (SEGSRPSASPQAPTLLPQQ) the composition is skewed to polar residues.

It belongs to the krueppel C2H2-type zinc-finger protein family. Phosphorylation at Ser-470 results in loss of DNA-binding activity. In terms of tissue distribution, ubiquitous. Highly expressed in brain, thymus and spleen.

It is found in the nucleus. In terms of biological role, may act as an transcriptional repressor for PCK1 gene expression, in turn may participate in the hepatic gluconeogenesis regulation through the activated AMPK signaling pathway. This chain is Zinc finger protein 692 (ZNF692), found in Homo sapiens (Human).